The sequence spans 395 residues: Acetate kinase 2 (395 aa).

N8 lines the Mg(2+) pocket. K15 contributes to the ATP binding site. R89 provides a ligand contact to substrate. Catalysis depends on D146, which acts as the Proton donor/acceptor. Residues 206-210, 283-285, and 331-335 each bind ATP; these read HIGNG, DMR, and GVGEN. E383 provides a ligand contact to Mg(2+).

This sequence belongs to the acetokinase family. In terms of assembly, homodimer. Mg(2+) serves as cofactor. The cofactor is Mn(2+).

It is found in the cytoplasm. The catalysed reaction is acetate + ATP = acetyl phosphate + ADP. Its pathway is metabolic intermediate biosynthesis; acetyl-CoA biosynthesis; acetyl-CoA from acetate: step 1/2. Its function is as follows. Catalyzes the formation of acetyl phosphate from acetate and ATP. Can also catalyze the reverse reaction. This chain is Acetate kinase 2, found in Lactococcus lactis subsp. lactis (strain IL1403) (Streptococcus lactis).